A 264-amino-acid chain; its full sequence is Secretory carrier-associated membrane protein 4 (264 aa).

Residues Met1–Pro33 are disordered. The Cytoplasmic portion of the chain corresponds to Met1 to Ala122. A coiled-coil region spans residues Met51–Phe85. Helical transmembrane passes span Ser123–Ile143, Ile150–Tyr170, Phe185–Ala205, and Ile233–Leu253. The Cytoplasmic segment spans residues Gln254–Lys264.

It belongs to the SCAMP family.

It is found in the cell membrane. Its subcellular location is the cytoplasmic vesicle. The protein resides in the secretory vesicle membrane. Its function is as follows. Probably involved in membrane trafficking. This is Secretory carrier-associated membrane protein 4 (SCAMP4) from Arabidopsis thaliana (Mouse-ear cress).